We begin with the raw amino-acid sequence, 29 residues long: Cytochrome b6-f complex subunit 8 (29 aa).

A helical transmembrane segment spans residues 3-23 (TVSIAWAALMVIFTFSISLVV).

This sequence belongs to the PetN family. In terms of assembly, the 4 large subunits of the cytochrome b6-f complex are cytochrome b6, subunit IV (17 kDa polypeptide, PetD), cytochrome f and the Rieske protein, while the 4 small subunits are PetG, PetL, PetM and PetN. The complex functions as a dimer.

The protein localises to the plastid. The protein resides in the chloroplast thylakoid membrane. Functionally, component of the cytochrome b6-f complex, which mediates electron transfer between photosystem II (PSII) and photosystem I (PSI), cyclic electron flow around PSI, and state transitions. In Psilotum nudum (Whisk fern), this protein is Cytochrome b6-f complex subunit 8.